We begin with the raw amino-acid sequence, 384 residues long: Decapping nuclease RAI1 (384 aa).

E168 serves as a coordination point for a divalent metal cation. Substrate is bound at residue E217. Positions 219, 237, and 238 each coordinate a divalent metal cation. Residues K239 and Q263 each contribute to the substrate site.

Belongs to the DXO/Dom3Z family. Interacts with RAT1; the interaction is direct, stabilizes RAT1 protein structure and stimulates its exoribonuclease activity. The interaction also stimulates RAI1 pyrophosphohydrolase activity, probably by recruiting it to mRNA substrates. The cofactor is a divalent metal cation.

It localises to the nucleus. It catalyses the reaction a 5'-end NAD(+)-phospho-ribonucleoside in mRNA + H2O = a 5'-end phospho-ribonucleoside in mRNA + NAD(+) + H(+). It carries out the reaction a 5'-end (N(7)-methyl 5'-triphosphoguanosine)-ribonucleoside-ribonucleotide in mRNA + H2O = a (N(7)-methyl 5'-triphosphoguanosine)-nucleoside + a 5'-end phospho-ribonucleoside in mRNA + H(+). The catalysed reaction is a 5'-end triphospho-ribonucleoside in mRNA + H2O = a 5'-end phospho-ribonucleoside in mRNA + diphosphate + H(+). In terms of biological role, decapping enzyme for NAD-capped RNAs: specifically hydrolyzes the nicotinamide adenine dinucleotide (NAD) cap from a subset of RNAs by removing the entire NAD moiety from the 5'-end of an NAD-capped RNA. The NAD-cap is present at the 5'-end of some RNAs and snoRNAs. In contrast to the canonical 5'-end N7 methylguanosine (m7G) cap, the NAD cap promotes mRNA decay. Also acts as a non-canonical decapping enzyme that removes the entire cap structure of m7G capped or incompletely capped RNAs. Has decapping activity toward incomplete 5'-end m7G cap mRNAs such as unmethylated 5'-end-capped RNA (cap0), while it has no activity toward 2'-O-ribose methylated m7G cap (cap1). Also possesses RNA 5'-pyrophosphohydrolase activity by hydrolyzing the 5'-end triphosphate to release pyrophosphates. Stimulates exoribonuclease activity of Rat1, allowing it to degrade RNAs with stable secondary structure more effectively. This Kluyveromyces lactis (strain ATCC 8585 / CBS 2359 / DSM 70799 / NBRC 1267 / NRRL Y-1140 / WM37) (Yeast) protein is Decapping nuclease RAI1 (RAI1).